We begin with the raw amino-acid sequence, 343 residues long: Protein RecA (343 aa).

65-72 (GPESSGKT) is an ATP binding site.

It belongs to the RecA family.

The protein localises to the cytoplasm. Can catalyze the hydrolysis of ATP in the presence of single-stranded DNA, the ATP-dependent uptake of single-stranded DNA by duplex DNA, and the ATP-dependent hybridization of homologous single-stranded DNAs. It interacts with LexA causing its activation and leading to its autocatalytic cleavage. This Xanthomonas campestris pv. campestris (strain 8004) protein is Protein RecA.